Here is a 323-residue protein sequence, read N- to C-terminus: DGIADASKKFSDATYPIAEKFDWGGSSAVAKYIADASASNPRQAALAVEKLLETGLTMDPKLVRAAVAAHSKALDTAVSNPKLVASKEDFAAVNEALARMIASADKQKFAALRTAFPESRELQSSLFAGNNGYEAEKAYDSFKALTSAVRDASINGANAPVIAEAARSERYVPDGPVGRAAKKFSEATYPIMEKLNWVKSPEISKYLATASSKDPKMMAPGIDKTLEVALTMNQNLINNAVYAHVRAIKGALNTPGFVAERDDFARVNLALAKMIGSADPAKFKALLTAFPGNADLQMALFAANPEQAKAAYETFVALTSAVV.

A run of 2 repeats spans residues 1-173 (DGIA…RYVP) and 174-323 (DGPV…SAVV).

As to quaternary structure, homotrimer.

It localises to the plastid. The protein localises to the chloroplast. In terms of biological role, water-soluble antenna for capture of solar energy in the blue-green range. Peridinin is an asymmetric carotenoid. The sequence is that of Peridinin-chlorophyll a-binding protein 3 from Amphidinium carterae (Dinoflagellate).